The sequence spans 378 residues: Putative glutamate--cysteine ligase 2 (378 aa).

The protein belongs to the glutamate--cysteine ligase type 2 family. YbdK subfamily.

It carries out the reaction L-cysteine + L-glutamate + ATP = gamma-L-glutamyl-L-cysteine + ADP + phosphate + H(+). Its function is as follows. ATP-dependent carboxylate-amine ligase which exhibits weak glutamate--cysteine ligase activity. In Pseudomonas paraeruginosa (strain DSM 24068 / PA7) (Pseudomonas aeruginosa (strain PA7)), this protein is Putative glutamate--cysteine ligase 2.